Reading from the N-terminus, the 192-residue chain is Ribosomal RNA small subunit methyltransferase G (192 aa).

S-adenosyl-L-methionine is bound by residues G63, F68, 112–113 (IE), and R125.

Belongs to the methyltransferase superfamily. RNA methyltransferase RsmG family.

It localises to the cytoplasm. It carries out the reaction guanosine(527) in 16S rRNA + S-adenosyl-L-methionine = N(7)-methylguanosine(527) in 16S rRNA + S-adenosyl-L-homocysteine. In terms of biological role, specifically methylates the N7 position of guanine in position 527 of 16S rRNA. The sequence is that of Ribosomal RNA small subunit methyltransferase G from Rickettsia bellii (strain OSU 85-389).